Here is a 751-residue protein sequence, read N- to C-terminus: Photosystem I P700 chlorophyll a apoprotein A1 (751 aa).

The next 8 helical transmembrane spans lie at 73-96, 159-182, 198-222, 294-312, 349-372, 388-414, 435-457, and 532-550; these read IFSAHFGQLSVIFLWLSGMYFHGA, LYCTAIGGLAMAALMLFAGWFHYH, MNHHLAGLLGLGCLGWTGHQIHLSL, TAHHHLALAVLFLAAGHMY, WHAQLAINLAMMGSLSIIVAHHMY, LSLFTHHMWIGGFCIVGAGAHASIFMV, AIVSHLNWVCIFLGFHSFGLYIH, and FLVHHIHAFTIHVTVLILV. [4Fe-4S] cluster-binding residues include C574 and C583. A run of 2 helical transmembrane segments spans residues 590–611 and 665–687; these read HVFLGLFWMYNSLSVAIFHFSW and LSAYGLIFLAAHFVWAFSLMFLF. A chlorophyll a'-binding site is contributed by H676. Residues M684 and Y692 each coordinate chlorophyll a. Position 693 (W693) interacts with phylloquinone. Residues 725–745 form a helical membrane-spanning segment; the sequence is AVGVAHYLLGGIGTTWAFFLA.

This sequence belongs to the PsaA/PsaB family. In terms of assembly, the PsaA/B heterodimer binds the P700 chlorophyll special pair and subsequent electron acceptors. PSI consists of a core antenna complex that captures photons, and an electron transfer chain that converts photonic excitation into a charge separation. The eukaryotic PSI reaction center is composed of at least 11 subunits. The cofactor is P700 is a chlorophyll a/chlorophyll a' dimer, A0 is one or more chlorophyll a, A1 is one or both phylloquinones and FX is a shared 4Fe-4S iron-sulfur center..

Its subcellular location is the plastid. The protein resides in the chloroplast thylakoid membrane. It catalyses the reaction reduced [plastocyanin] + hnu + oxidized [2Fe-2S]-[ferredoxin] = oxidized [plastocyanin] + reduced [2Fe-2S]-[ferredoxin]. In terms of biological role, psaA and PsaB bind P700, the primary electron donor of photosystem I (PSI), as well as the electron acceptors A0, A1 and FX. PSI is a plastocyanin/cytochrome c6-ferredoxin oxidoreductase, converting photonic excitation into a charge separation, which transfers an electron from the donor P700 chlorophyll pair to the spectroscopically characterized acceptors A0, A1, FX, FA and FB in turn. Oxidized P700 is reduced on the lumenal side of the thylakoid membrane by plastocyanin or cytochrome c6. The sequence is that of Photosystem I P700 chlorophyll a apoprotein A1 from Pyropia yezoensis (Susabi-nori).